A 161-amino-acid polypeptide reads, in one-letter code: Bifurcating [FeFe] hydrogenase gamma subunit (161 aa).

Cys78, Cys83, Cys119, and Cys123 together coordinate [2Fe-2S] cluster.

Belongs to the complex I 24 kDa subunit family. As to quaternary structure, heterotrimer composed of HydA (alpha subunit), HydB (beta subunit) and HydC (gamma subunit). Near neutral and acidic pH conditions favor oligomerization of the heterotrimeric holoenzyme. [2Fe-2S] cluster serves as cofactor.

Its subcellular location is the cytoplasm. The enzyme catalyses 2 H2 + 2 oxidized [2Fe-2S]-[ferredoxin] + NAD(+) = 2 reduced [2Fe-2S]-[ferredoxin] + NADH + 3 H(+). Its function is as follows. Catalyzes the oxidation of the physiological electron carriers NADH and reduced ferredoxin, coupled to the production of H(2). Acts as a bifurcating [FeFe] hydrogenase, which uses the exergonic oxidation of reduced ferredoxin to drive the unfavorable oxidation of NADH to produce H(2). The gamma subunit might be the site where reduced ferredoxin is oxidized. The polypeptide is Bifurcating [FeFe] hydrogenase gamma subunit (Thermotoga maritima (strain ATCC 43589 / DSM 3109 / JCM 10099 / NBRC 100826 / MSB8)).